Here is a 288-residue protein sequence, read N- to C-terminus: Quinate/shikimate dehydrogenase (288 aa).

Substrate contacts are provided by K71 and D107. Residues 132-135 (AGGA), 155-158 (NRRD), K205, 232-235 (CVYN), and G255 contribute to the NAD(+) site.

Belongs to the shikimate dehydrogenase family. In terms of assembly, homodimer.

It catalyses the reaction L-quinate + NAD(+) = 3-dehydroquinate + NADH + H(+). It carries out the reaction L-quinate + NADP(+) = 3-dehydroquinate + NADPH + H(+). The catalysed reaction is shikimate + NADP(+) = 3-dehydroshikimate + NADPH + H(+). The enzyme catalyses shikimate + NAD(+) = 3-dehydroshikimate + NADH + H(+). Its pathway is metabolic intermediate biosynthesis; chorismate biosynthesis; chorismate from D-erythrose 4-phosphate and phosphoenolpyruvate: step 4/7. Its function is as follows. The actual biological function of YdiB remains unclear, nor is it known whether 3-dehydroshikimate or quinate represents the natural substrate. Catalyzes the reversible NAD-dependent reduction of both 3-dehydroshikimate (DHSA) and 3-dehydroquinate to yield shikimate (SA) and quinate, respectively. It can use both NAD or NADP for catalysis, however it has higher catalytic efficiency with NAD. This Escherichia coli (strain SMS-3-5 / SECEC) protein is Quinate/shikimate dehydrogenase.